Reading from the N-terminus, the 310-residue chain is Membrane protein insertase YidC 2 (310 aa).

The first 23 residues, 1–23 (MKKTLKRILFSSLSLSILLLLTG), serve as a signal peptide directing secretion. Cys24 carries the N-palmitoyl cysteine lipid modification. Residue Cys24 is the site of S-diacylglycerol cysteine attachment. The next 5 helical transmembrane spans lie at 33–53 (PYGV…TYFA), 58–78 (LGFG…ILPL), 135–155 (FGGI…AIFF), 180–200 (LTVI…QGVP), and 219–239 (VFMS…GGIF). Residues 262 to 310 (EYTKNPPKAYKSNNARKDVTSSTKTTESNQAIITSKKTNRNAGKQKRRG) are disordered. Polar residues predominate over residues 281 to 297 (TSSTKTTESNQAIITSK). Over residues 298–310 (KTNRNAGKQKRRG) the composition is skewed to basic residues.

It belongs to the OXA1/ALB3/YidC family. Type 2 subfamily.

The protein localises to the cell membrane. Its function is as follows. Required for the insertion and/or proper folding and/or complex formation of integral membrane proteins into the membrane. Involved in integration of membrane proteins that insert both dependently and independently of the Sec translocase complex, as well as at least some lipoproteins. This is Membrane protein insertase YidC 2 from Streptococcus agalactiae serotype III (strain NEM316).